Consider the following 157-residue polypeptide: Protein-export protein SecB (157 aa).

This sequence belongs to the SecB family. In terms of assembly, homotetramer, a dimer of dimers. One homotetramer interacts with 1 SecA dimer.

The protein localises to the cytoplasm. Functionally, one of the proteins required for the normal export of preproteins out of the cell cytoplasm. It is a molecular chaperone that binds to a subset of precursor proteins, maintaining them in a translocation-competent state. It also specifically binds to its receptor SecA. In Photobacterium profundum (strain SS9), this protein is Protein-export protein SecB.